Reading from the N-terminus, the 449-residue chain is UDP-N-acetylmuramate--L-alanine ligase (449 aa).

ATP is bound at residue 121–127 (GAHGKSS).

This sequence belongs to the MurCDEF family.

It localises to the cytoplasm. It carries out the reaction UDP-N-acetyl-alpha-D-muramate + L-alanine + ATP = UDP-N-acetyl-alpha-D-muramoyl-L-alanine + ADP + phosphate + H(+). It participates in cell wall biogenesis; peptidoglycan biosynthesis. In terms of biological role, cell wall formation. The polypeptide is UDP-N-acetylmuramate--L-alanine ligase (Helicobacter pylori (strain P12)).